Consider the following 172-residue polypeptide: C-phycocyanin subunit beta (172 aa).

N4-methylasparagine is present on Asn-72. (2R,3E)-phycocyanobilin-binding residues include Cys-82 and Cys-153.

This sequence belongs to the phycobiliprotein family. As to quaternary structure, heterodimer of an alpha and a beta subunit, which further assembles into trimers and the trimers into hexamers. In terms of processing, contains two covalently linked bilin chromophores. The chromophore on position 82 is added by the phycocyanobilin lyase CpcUS, while the chromophore on position 153 is added by the phycocyanobilin lyase CpcT.

It localises to the cellular thylakoid membrane. Its function is as follows. Light-harvesting photosynthetic bile pigment-protein from the phycobiliprotein complex (phycobilisome, PBS). Phycocyanin is the major phycobiliprotein in the PBS rod. This is C-phycocyanin subunit beta (cpcB) from Picosynechococcus sp. (strain ATCC 27264 / PCC 7002 / PR-6) (Agmenellum quadruplicatum).